A 436-amino-acid chain; its full sequence is Phosphatidylinositol transfer protein CSR1 (436 aa).

Residues valine 85–glutamine 104 form a disordered region. Over residues tyrosine 86–threonine 102 the composition is skewed to basic and acidic residues. The region spanning lysine 188 to phenylalanine 347 is the CRAL-TRIO domain.

The protein belongs to the PITP family. Binds phosphatidylinositol (PtdIns).

Its subcellular location is the cytoplasm. The protein resides in the endosome. Its function is as follows. Non-classical phosphatidylinositol (PtdIns) transfer protein (PITP), which exhibits PtdIns-binding/transfer activity in the absence of detectable PtdCho-binding/transfer activity. May also regulate post-Golgi membrane-trafficking events and have a role resistance to oxidative stress. The polypeptide is Phosphatidylinositol transfer protein CSR1 (CSR1) (Eremothecium gossypii (strain ATCC 10895 / CBS 109.51 / FGSC 9923 / NRRL Y-1056) (Yeast)).